The primary structure comprises 134 residues: Methylglyoxal synthase (134 aa).

Residues 1-134 (MKIALIAHDR…DWRLIQERRN (134 aa)) form the MGS-like domain. Substrate is bound by residues H8, K12, 34–37 (TGTT), and 54–55 (SG). The active-site Proton donor/acceptor is the D60. Substrate is bound at residue H87.

This sequence belongs to the methylglyoxal synthase family.

The enzyme catalyses dihydroxyacetone phosphate = methylglyoxal + phosphate. In terms of biological role, catalyzes the formation of methylglyoxal from dihydroxyacetone phosphate. In Lysinibacillus sphaericus (strain C3-41), this protein is Methylglyoxal synthase.